We begin with the raw amino-acid sequence, 449 residues long: MENIHDLWERALKSMEKKVSKPSFETWLKQTKANSIEDSTIIITAPNEFARDWLEKHYDELISETIDDLTGVRLYPKFVIPTSQLDEPFVEQELKKPMKQPPAQNGEMPNNMLNDKYTFDTFVIGSGNRFAHAASLAVAEAPAKAYNPLFIYGGVGLGKTHLMHAIGHYVMDHNPNAKVVYLSSEKFTNEFINAIRDNKAVNFRNKYRNVDVLLIDDIQFLAGKEQTQEEFFHTFNALHEDNKQIVISSDRPPKEIPTLEDRLRSRFEWGLITDITPPDLETRIAILRKKAKAENLDIPNEVMLYIANQIDTNIRELEGALIRVVAYSSLINQDMNADLAAEALKDIIPNAKPRVLTITDIQKTVGEYFHVKLEDFKAKKRTKSVAFPRQIAMYLSRELTDASLPKIGSEFGGRDHTTVIHAHEKISKLLSTDQELQDKIQDISDKLRS.

The interval 1–72 is domain I, interacts with DnaA modulators; the sequence is MENIHDLWER…SETIDDLTGV (72 aa). The tract at residues 72 to 111 is domain II; that stretch reads VRLYPKFVIPTSQLDEPFVEQELKKPMKQPPAQNGEMPNN. The interval 112 to 328 is domain III, AAA+ region; the sequence is MLNDKYTFDT…GALIRVVAYS (217 aa). ATP contacts are provided by G156, G158, K159, and T160. The interval 329-449 is domain IV, binds dsDNA; it reads SLINQDMNAD…IQDISDKLRS (121 aa).

This sequence belongs to the DnaA family. As to quaternary structure, oligomerizes as a right-handed, spiral filament on DNA at oriC.

It is found in the cytoplasm. Functionally, plays an essential role in the initiation and regulation of chromosomal replication. ATP-DnaA binds to the origin of replication (oriC) to initiate formation of the DNA replication initiation complex once per cell cycle. Binds the DnaA box (a 9 base pair repeat at the origin) and separates the double-stranded (ds)DNA. Forms a right-handed helical filament on oriC DNA; dsDNA binds to the exterior of the filament while single-stranded (ss)DNA is stabiized in the filament's interior. The ATP-DnaA-oriC complex binds and stabilizes one strand of the AT-rich DNA unwinding element (DUE), permitting loading of DNA polymerase. After initiation quickly degrades to an ADP-DnaA complex that is not apt for DNA replication. Binds acidic phospholipids. In Halalkalibacterium halodurans (strain ATCC BAA-125 / DSM 18197 / FERM 7344 / JCM 9153 / C-125) (Bacillus halodurans), this protein is Chromosomal replication initiator protein DnaA.